Reading from the N-terminus, the 95-residue chain is MNNHFGKGLMAGLKATHADSAVNVTKFCADYKRGFVLGYSHRMYEKTGDRQLSAWEAGILTRRYGLDKEMVMDFFRENNSCSTLRFFMAGYRLEN.

This is an uncharacterized protein from Escherichia coli O6:H1 (strain CFT073 / ATCC 700928 / UPEC).